Reading from the N-terminus, the 505-residue chain is Monocarboxylate transporter 10 (505 aa).

Positions 1 to 14 (MTEPEPTLEQEPTP) are enriched in acidic residues. The disordered stretch occupies residues 1-64 (MTEPEPTLEQ…EQKSPEEFEP (64 aa)). Residues 1-66 (MTEPEPTLEQ…KSPEEFEPPE (66 aa)) are Cytoplasmic-facing. Over residues 15–31 (EPEPTQEPTPEPTPEPE) the composition is skewed to pro residues. Acidic residues predominate over residues 32-41 (PTQEPESEPE). The helical transmembrane segment at 67–87 (GGWGWVVMLASMWCNGSVFGI) threads the bilayer. The Extracellular portion of the chain corresponds to 88 to 114 (QNAFGIMFVYLLNEFGSEHDADLRFKT). A helical transmembrane segment spans residues 115-135 (AWVGSLSMGMIFFCSPIVSVF). Residues 136 to 142 (TDLLGCR) lie on the Cytoplasmic side of the membrane. A helical membrane pass occupies residues 143 to 163 (ITAVGGAAVGCVGLLASSFVT). Residues 164–171 (SLGPMYFT) are Extracellular-facing. A helical membrane pass occupies residues 172–192 (YGIVFACGCSFAYQPSLVILG). Over 193–204 (HYFKRRLGLVNG) the chain is Cytoplasmic. Residues 205–225 (IVTAGSSVFTITLPYMLSGLL) form a helical membrane-spanning segment. Over 226 to 235 (KSVGLYHTLR) the chain is Extracellular. A helical transmembrane segment spans residues 236-256 (VLAIFMFILMLAGLTYKPLLP). Over 257–286 (KPVSSSKPGSRCPPLSRIFNVNIWKSLGYR) the chain is Cytoplasmic. A helical membrane pass occupies residues 287–307 (IWAFGIPAALYGYFVPYVHLM). Residues 308-321 (THVEERFGPEANKE) are Extracellular-facing. A helical membrane pass occupies residues 322–342 (VLLACIGITSGVGRLIFGRVA). A topological domain (cytoplasmic) is located at residue Asp-343. The helical transmembrane segment at 344–364 (YVPGVNKVFLQVSSFMVIGVM) threads the bilayer. Residues 365-377 (SMMIPLCHVFGGL) are Extracellular-facing. Residues 378–400 (IAVCLLMGLFDGCFICIMAPIAF) form a helical membrane-spanning segment. Topologically, residues 401-411 (ELVGSQNVSQA) are cytoplasmic. The helical transmembrane segment at 412–432 (IGFLLGMMSIPMTVGPPIAGF) threads the bilayer. Over 433–443 (LRDRLGSYDVA) the chain is Extracellular. Residues 444-464 (FYLAGIPPLIGGAVLCAIPWV) form a helical membrane-spanning segment. The Cytoplasmic segment spans residues 465 to 505 (EARRKRREAANTAENTEKMLESRSPPLEDTVCRTEEPESVI). The tract at residues 474 to 505 (ANTAENTEKMLESRSPPLEDTVCRTEEPESVI) is disordered. The span at 494–505 (TVCRTEEPESVI) shows a compositional bias: basic and acidic residues.

It belongs to the major facilitator superfamily. Monocarboxylate porter (TC 2.A.1.13) family.

The protein resides in the cell membrane. It is found in the basolateral cell membrane. It catalyses the reaction L-tryptophan(in) = L-tryptophan(out). It carries out the reaction L-tyrosine(in) = L-tyrosine(out). The enzyme catalyses L-phenylalanine(in) = L-phenylalanine(out). The catalysed reaction is 3,3',5-triiodo-L-thyronine(out) = 3,3',5-triiodo-L-thyronine(in). It catalyses the reaction L-thyroxine(out) = L-thyroxine(in). Its function is as follows. Sodium- and proton-independent thyroid hormones and aromatic acids transporter. Mediates both uptake and efflux of 3,5,3'-triiodothyronine (T3) and 3,5,3',5'-tetraiodothyronine (T4) with high affinity, suggesting a role in the homeostasis of thyroid hormone levels. Responsible for low affinity bidirectional transport of the aromatic amino acids, such as phenylalanine, tyrosine, tryptophan and L-3,4-dihydroxyphenylalanine (L-dopa). Plays an important role in homeostasis of aromatic amino acids. The sequence is that of Monocarboxylate transporter 10 (slc16a10) from Danio rerio (Zebrafish).